Reading from the N-terminus, the 187-residue chain is Transcriptional regulator VspR (187 aa).

Represses the transcription of several genes encoded within the Vibrio 7th pandemic island-1 (VSP-1), including dncV, VC_0176, VC_0178 and VC_0180. The polypeptide is Transcriptional regulator VspR (vspR) (Vibrio cholerae serotype O1 (strain ATCC 39315 / El Tor Inaba N16961)).